A 180-amino-acid chain; its full sequence is Hypoxanthine-guanine phosphoribosyltransferase (180 aa).

Diphosphate-binding residues include K43 and G44. Residues E99 and D100 each coordinate Mg(2+). The active-site Proton acceptor is D103. GMP is bound by residues K131, 152–153, and D159; that span reads FI. R165 contacts diphosphate.

The protein belongs to the purine/pyrimidine phosphoribosyltransferase family. Mg(2+) serves as cofactor.

The protein localises to the cytoplasm. It carries out the reaction IMP + diphosphate = hypoxanthine + 5-phospho-alpha-D-ribose 1-diphosphate. It catalyses the reaction GMP + diphosphate = guanine + 5-phospho-alpha-D-ribose 1-diphosphate. It participates in purine metabolism; IMP biosynthesis via salvage pathway; IMP from hypoxanthine: step 1/1. Its pathway is purine metabolism; GMP biosynthesis via salvage pathway; GMP from guanine: step 1/1. In terms of biological role, purine salvage pathway enzyme that catalyzes the transfer of the ribosyl-5-phosphate group from 5-phospho-alpha-D-ribose 1-diphosphate (PRPP) to the N9 position of the 6-oxopurines hypoxanthine and guanine to form the corresponding ribonucleotides IMP (inosine 5'-monophosphate) and GMP (guanosine 5'-monophosphate), with the release of PPi. The protein is Hypoxanthine-guanine phosphoribosyltransferase (hpt) of Streptococcus mutans serotype c (strain ATCC 700610 / UA159).